The sequence spans 121 residues: Large ribosomal subunit protein bL12 (121 aa).

It belongs to the bacterial ribosomal protein bL12 family. As to quaternary structure, homodimer. Part of the ribosomal stalk of the 50S ribosomal subunit. Forms a multimeric L10(L12)X complex, where L10 forms an elongated spine to which 2 to 4 L12 dimers bind in a sequential fashion. Binds GTP-bound translation factors.

Forms part of the ribosomal stalk which helps the ribosome interact with GTP-bound translation factors. Is thus essential for accurate translation. The sequence is that of Large ribosomal subunit protein bL12 from Clostridium perfringens (strain 13 / Type A).